Reading from the N-terminus, the 434-residue chain is Enolase (434 aa).

Q165 lines the (2R)-2-phosphoglycerate pocket. E207 (proton donor) is an active-site residue. Mg(2+)-binding residues include D244, E291, and D318. K343, R372, S373, and K394 together coordinate (2R)-2-phosphoglycerate. Catalysis depends on K343, which acts as the Proton acceptor.

This sequence belongs to the enolase family. Requires Mg(2+) as cofactor.

The protein resides in the cytoplasm. It localises to the secreted. Its subcellular location is the cell surface. It carries out the reaction (2R)-2-phosphoglycerate = phosphoenolpyruvate + H2O. It functions in the pathway carbohydrate degradation; glycolysis; pyruvate from D-glyceraldehyde 3-phosphate: step 4/5. Its function is as follows. Catalyzes the reversible conversion of 2-phosphoglycerate (2-PG) into phosphoenolpyruvate (PEP). It is essential for the degradation of carbohydrates via glycolysis. The protein is Enolase of Staphylococcus haemolyticus (strain JCSC1435).